Reading from the N-terminus, the 77-residue chain is MARITVEDCQKRIDNRFLLVQMAIKRVQQYREGYEPLVDSKNKEVVTALREIAAGKVMPEDLALYRPAEGEEMPVAE.

The protein belongs to the RNA polymerase subunit omega family. The RNAP catalytic core consists of 2 alpha, 1 beta, 1 beta' and 1 omega subunit. When a sigma factor is associated with the core the holoenzyme is formed, which can initiate transcription.

It carries out the reaction RNA(n) + a ribonucleoside 5'-triphosphate = RNA(n+1) + diphosphate. Promotes RNA polymerase assembly. Latches the N- and C-terminal regions of the beta' subunit thereby facilitating its interaction with the beta and alpha subunits. The chain is DNA-directed RNA polymerase subunit omega from Nitratidesulfovibrio vulgaris (strain ATCC 29579 / DSM 644 / CCUG 34227 / NCIMB 8303 / VKM B-1760 / Hildenborough) (Desulfovibrio vulgaris).